We begin with the raw amino-acid sequence, 337 residues long: Glyceraldehyde-3-phosphate dehydrogenase (337 aa).

NAD(+) contacts are provided by residues 11 to 12 (RI), aspartate 33, and lysine 78. D-glyceraldehyde 3-phosphate-binding positions include 149–151 (SCT), threonine 180, 209–210 (TG), and arginine 232. Cysteine 150 acts as the Nucleophile in catalysis. Asparagine 314 contacts NAD(+).

Belongs to the glyceraldehyde-3-phosphate dehydrogenase family. In terms of assembly, homotetramer.

The protein localises to the cytoplasm. The enzyme catalyses D-glyceraldehyde 3-phosphate + phosphate + NAD(+) = (2R)-3-phospho-glyceroyl phosphate + NADH + H(+). It functions in the pathway carbohydrate degradation; glycolysis; pyruvate from D-glyceraldehyde 3-phosphate: step 1/5. The protein is Glyceraldehyde-3-phosphate dehydrogenase (GPD) of Lyophyllum shimeji (Hon-shimeji).